The primary structure comprises 509 residues: Light-independent protochlorophyllide reductase subunit B (509 aa).

Aspartate 36 contributes to the [4Fe-4S] cluster binding site. The Proton donor role is filled by aspartate 298. Substrate is bound at residue 433–434 (GM).

The protein belongs to the ChlB/BchB/BchZ family. Protochlorophyllide reductase is composed of three subunits; ChlL, ChlN and ChlB. Forms a heterotetramer of two ChlB and two ChlN subunits. The cofactor is [4Fe-4S] cluster.

Its subcellular location is the plastid. The protein resides in the chloroplast. The catalysed reaction is chlorophyllide a + oxidized 2[4Fe-4S]-[ferredoxin] + 2 ADP + 2 phosphate = protochlorophyllide a + reduced 2[4Fe-4S]-[ferredoxin] + 2 ATP + 2 H2O. The protein operates within porphyrin-containing compound metabolism; chlorophyll biosynthesis (light-independent). Component of the dark-operative protochlorophyllide reductase (DPOR) that uses Mg-ATP and reduced ferredoxin to reduce ring D of protochlorophyllide (Pchlide) to form chlorophyllide a (Chlide). This reaction is light-independent. The NB-protein (ChlN-ChlB) is the catalytic component of the complex. This Ephedra altissima (High-climbing jointfir) protein is Light-independent protochlorophyllide reductase subunit B.